A 328-amino-acid polypeptide reads, in one-letter code: Dolichyl-diphosphooligosaccharide--protein glycosyltransferase subunit MAGT1 (328 aa).

Residues 1–22 form the signal peptide; the sequence is MLHKLLIVVFLVVCLHDMRLNG. The Extracellular segment spans residues 23–177; that stretch reads QKKKETLLSE…DVHIRVIRPP (155 aa). In terms of domain architecture, Thioredoxin spans 40-168; it reads WVSKRAVVRL…LARWVADRTD (129 aa). N-linked (GlcNAc...) asparagine glycosylation is present at Asn64. A disulfide bridge connects residues Cys80 and Cys83. The helical transmembrane segment at 178–198 threads the bilayer; the sequence is NYAGPLMLGLLLAFIGSLAYL. Residues 199 to 202 lie on the Cytoplasmic side of the membrane; it reads RRNN. Residues 203–223 traverse the membrane as a helical segment; sequence LEFLFNKNVWAFSALCFVLIM. The Extracellular portion of the chain corresponds to 224–257; that stretch reads TSGQMWNHIRGPPYAHKNPNTGQVSYIHGSSQAQ. The chain crosses the membrane as a helical span at residues 258 to 278; it reads FVAETHIVLLFNAAVTIGMVL. Residues 279 to 293 lie on the Cytoplasmic side of the membrane; that stretch reads LHEAATSGLDIVKRK. The helical transmembrane segment at 294–314 threads the bilayer; that stretch reads IMCVAGIGLVVLFFSWLLSVF. The Extracellular portion of the chain corresponds to 315–328; sequence RAKYHGYPYSFLFG.

Belongs to the OST3/OST6 family. Accessory component of the STT3B-containing form of the oligosaccharyltransferase (OST) complex.

It localises to the cell membrane. Its subcellular location is the endoplasmic reticulum. It is found in the endoplasmic reticulum membrane. The protein operates within protein modification; protein glycosylation. Its function is as follows. Accessory component of the STT3B-containing form of the N-oligosaccharyl transferase (OST) complex which catalyzes the transfer of a high mannose oligosaccharide from a lipid-linked oligosaccharide donor to an asparagine residue within an Asn-X-Ser/Thr consensus motif in nascent polypeptide chains. Involved in N-glycosylation of STT3B-dependent substrates. Specifically required for the glycosylation of a subset of acceptor sites that are near cysteine residues; in this function seems to act redundantly with TUSC3. In its oxidized form proposed to form transient mixed disulfides with a glycoprotein substrate to facilitate access of STT3B to the unmodified acceptor site. Also has oxidoreductase-independent functions in the STT3B-containing OST complex possibly involving substrate recognition. Could indirectly play a role in Mg(2+) transport. This is Dolichyl-diphosphooligosaccharide--protein glycosyltransferase subunit MAGT1 from Danio rerio (Zebrafish).